Reading from the N-terminus, the 102-residue chain is Cytochrome b (102 aa).

3 helical membrane-spanning segments follow: residues 1-21 (FGSLLGLCLITQILTGLFLAM), 45-66 (WLMRNIHANGASFFFICIFLHI), and 81-101 (WNIGVILLFLVMATAFVGYVL). 2 residues coordinate heme b: His51 and His65.

Belongs to the cytochrome b family. As to quaternary structure, the cytochrome bc1 complex contains 3 respiratory subunits (MT-CYB, CYC1 and UQCRFS1), 2 core proteins (UQCRC1 and UQCRC2) and probably 6 low-molecular weight proteins. It depends on heme b as a cofactor.

The protein localises to the mitochondrion inner membrane. In terms of biological role, component of the ubiquinol-cytochrome c reductase complex (complex III or cytochrome b-c1 complex) that is part of the mitochondrial respiratory chain. The b-c1 complex mediates electron transfer from ubiquinol to cytochrome c. Contributes to the generation of a proton gradient across the mitochondrial membrane that is then used for ATP synthesis. This Ambystoma tigrinum (Eastern tiger salamander) protein is Cytochrome b (mt-cyb).